The chain runs to 98 residues: Protein Frey 1 (98 aa).

Residues 13–29 (AGLSLFLHLILAVALLR) traverse the membrane as a helical segment. The segment at 60–87 (YGILPKHPRPRGPRPLLSRAQQRKRDGP) is disordered.

As to quaternary structure, interacts with SPPL2C (via active sites); the interaction stabilizes FREY1 protein and inhibits SPPL2C proteolytic activity. Interacts with IZUMO1; the interaction retains IZUMO1 at the endoplasmic reticulum membrane and coordinates IZUMO1 complex assembly.

The protein resides in the endoplasmic reticulum membrane. Its function is as follows. Key regulator for male fertility expressed transiently in round spermatids where it recruits IZUMO1 at the endoplasmic reticulum (ER) membrane and coordinates the oolemmal binding multimeric complex (IZUMO1 complex) assembly. Upon complete assembly of the IZUMO1 complex, its ER retention is released, facilitating IZUMO1 complex export to the acrosome. Through the interaction with SPPL2C, inhibits its intramembrane protease activity directly accessing the catalytic center of an I-CLiP. This is Protein Frey 1 from Homo sapiens (Human).